Here is a 550-residue protein sequence, read N- to C-terminus: Membrane-bound alkaline phosphatase (550 aa).

The first 39 residues, 1–39, serve as a signal peptide directing secretion; it reads MSTWWLVVVAAAAAAGLVRAEDRYHPERLAAGEASAATR. A Mg(2+)-binding site is contributed by aspartate 83. Residue aspartate 83 coordinates Zn(2+). The Phosphoserine intermediate role is filled by serine 133. The Mg(2+) site is built by histidine 196, serine 198, and glutamate 356. Positions 361, 365, 402, 403, and 479 each coordinate Zn(2+). The GPI-anchor amidated serine moiety is linked to residue serine 524. Positions 525–550 are cleaved as a propeptide — removed in mature form; sequence AATVPTAALLSLLLAAFITLRHQCFL.

It belongs to the alkaline phosphatase family. The cofactor is Mg(2+). It depends on Zn(2+) as a cofactor. As to expression, midgut.

Its subcellular location is the cell membrane. It carries out the reaction a phosphate monoester + H2O = an alcohol + phosphate. The sequence is that of Membrane-bound alkaline phosphatase (Alp-m) from Bombyx mori (Silk moth).